The following is a 308-amino-acid chain: uncharacterized protein (308 aa).

Residues 212 to 242 (EADKMTIDYMRELDNLQRQYDGLVDEDKALH) adopt a coiled-coil conformation.

This is an uncharacterized protein from Ostreid herpesvirus 1 (isolate France) (OsHV-1).